The following is a 132-amino-acid chain: Small ribosomal subunit protein uS8 (132 aa).

The protein belongs to the universal ribosomal protein uS8 family. As to quaternary structure, part of the 30S ribosomal subunit. Contacts proteins S5 and S12.

Its function is as follows. One of the primary rRNA binding proteins, it binds directly to 16S rRNA central domain where it helps coordinate assembly of the platform of the 30S subunit. This Exiguobacterium sp. (strain ATCC BAA-1283 / AT1b) protein is Small ribosomal subunit protein uS8.